The primary structure comprises 183 residues: Probable calcium-binding protein CML47 (183 aa).

EF-hand domains follow at residues Met112–Asp147 and Cys149–Ser183. Asp125, Asn127, Asp129, Glu136, Asp162, Asn164, Asp166, Lys168, and Glu173 together coordinate Ca(2+).

Its function is as follows. Potential calcium sensor. This chain is Probable calcium-binding protein CML47 (CML47), found in Arabidopsis thaliana (Mouse-ear cress).